We begin with the raw amino-acid sequence, 75 residues long: UPF0057 membrane protein At2g24040 (75 aa).

A run of 2 helical transmembrane segments spans residues 4–24 (SCEL…GVCL) and 33–53 (FFIC…YAIY).

This sequence belongs to the UPF0057 (PMP3) family.

The protein resides in the membrane. This is UPF0057 membrane protein At2g24040 from Arabidopsis thaliana (Mouse-ear cress).